The sequence spans 495 residues: ATP synthase subunit beta, chloroplastic (495 aa).

172–179 (GGAGVGKT) lines the ATP pocket.

It belongs to the ATPase alpha/beta chains family. In terms of assembly, F-type ATPases have 2 components, CF(1) - the catalytic core - and CF(0) - the membrane proton channel. CF(1) has five subunits: alpha(3), beta(3), gamma(1), delta(1), epsilon(1). CF(0) has four main subunits: a(1), b(1), b'(1) and c(9-12).

Its subcellular location is the plastid. It is found in the chloroplast thylakoid membrane. The enzyme catalyses ATP + H2O + 4 H(+)(in) = ADP + phosphate + 5 H(+)(out). Produces ATP from ADP in the presence of a proton gradient across the membrane. The catalytic sites are hosted primarily by the beta subunits. In Brimeura amethystina (Spanish hyacinth), this protein is ATP synthase subunit beta, chloroplastic.